The primary structure comprises 512 residues: Phosphoenolpyruvate carboxylase (512 aa).

It belongs to the PEPCase type 2 family. Homotetramer. Mg(2+) is required as a cofactor.

The enzyme catalyses oxaloacetate + phosphate = phosphoenolpyruvate + hydrogencarbonate. Catalyzes the irreversible beta-carboxylation of phosphoenolpyruvate (PEP) to form oxaloacetate (OAA), a four-carbon dicarboxylic acid source for the tricarboxylic acid cycle. The sequence is that of Phosphoenolpyruvate carboxylase from Caldivirga maquilingensis (strain ATCC 700844 / DSM 13496 / JCM 10307 / IC-167).